A 246-amino-acid chain; its full sequence is 4-hydroxy-tetrahydrodipicolinate reductase (246 aa).

7–12 is a binding site for NAD(+); that stretch reads GCSGRM. R34 serves as a coordination point for NADP(+). Residues 76–78 and 102–105 contribute to the NAD(+) site; these read ATT and CPNT. The active-site Proton donor/acceptor is the H135. (S)-2,3,4,5-tetrahydrodipicolinate is bound at residue H136. The active-site Proton donor is K139. 145–146 contacts (S)-2,3,4,5-tetrahydrodipicolinate; it reads GT.

This sequence belongs to the DapB family.

The protein localises to the cytoplasm. The catalysed reaction is (S)-2,3,4,5-tetrahydrodipicolinate + NAD(+) + H2O = (2S,4S)-4-hydroxy-2,3,4,5-tetrahydrodipicolinate + NADH + H(+). It catalyses the reaction (S)-2,3,4,5-tetrahydrodipicolinate + NADP(+) + H2O = (2S,4S)-4-hydroxy-2,3,4,5-tetrahydrodipicolinate + NADPH + H(+). It participates in amino-acid biosynthesis; L-lysine biosynthesis via DAP pathway; (S)-tetrahydrodipicolinate from L-aspartate: step 4/4. Catalyzes the conversion of 4-hydroxy-tetrahydrodipicolinate (HTPA) to tetrahydrodipicolinate. The sequence is that of 4-hydroxy-tetrahydrodipicolinate reductase from Chlamydia felis (strain Fe/C-56) (Chlamydophila felis).